Here is a 748-residue protein sequence, read N- to C-terminus: Methylmalonyl-CoA mutase, mitochondrial (748 aa).

The N-terminal 30 residues, 1–30 (MLRAKNQLFLLSPHYLKQLNIPSASRWKRL), are a transit peptide targeting the mitochondrion. Gln48 contributes to the malonyl-CoA binding site. Position 87 is an N6-acetyllysine (Lys87). Malonyl-CoA-binding positions include 94 to 97 (YPTM) and 104 to 108 (TIRQY). The residue at position 210 (Lys210) is an N6-acetyllysine. Malonyl-CoA contacts are provided by residues 214-216 (TIQ), Arg226, Lys253, His263, and 302-304 (RLS). Lys333 carries the N6-acetyllysine modification. N6-succinyllysine is present on Lys341. At Ser479 the chain carries Phosphoserine. Residue Lys593 is modified to N6-succinyllysine. Lys600 carries the N6-acetyllysine modification. The region spanning 612-744 (RPRLLVAKMG…DDIEKCLAEK (133 aa)) is the B12-binding domain. Residue His625 coordinates adenosylcob(III)alamin.

This sequence belongs to the methylmalonyl-CoA mutase family. Homodimer. Interacts (the apoenzyme form) with MMAA; the interaction is GTP dependent. Requires adenosylcob(III)alamin as cofactor.

It localises to the mitochondrion matrix. It is found in the mitochondrion. The protein resides in the cytoplasm. The catalysed reaction is (R)-methylmalonyl-CoA = succinyl-CoA. Its activity is regulated as follows. Inhibited by itaconyl-CoA, a metabolite that inactivates the coenzyme B12 cofactor. Its function is as follows. Catalyzes the reversible isomerization of methylmalonyl-CoA (MMCoA) (generated from branched-chain amino acid metabolism and degradation of dietary odd chain fatty acids and cholesterol) to succinyl-CoA (3-carboxypropionyl-CoA), a key intermediate of the tricarboxylic acid cycle. The protein is Methylmalonyl-CoA mutase, mitochondrial (Mmut) of Mus musculus (Mouse).